The sequence spans 114 residues: DNA-directed RNA polymerases II, IV and V subunit 9A (114 aa).

Cys7, Cys10, Cys29, Cys32, Cys76, Cys79, Cys103, and Cys108 together coordinate Zn(2+). Residues 72–113 (KAVRCSKCQHREAVFFQATARGEEGMTLFFVCCNPNCGHRWR) form a TFIIS-type zinc finger.

Belongs to the archaeal RpoM/eukaryotic RPA12/RPB9/RPC11 RNA polymerase family. In terms of assembly, component of the RNA polymerase II, IV and V complexes. Interacts with NRPD1.

It localises to the nucleus. The protein localises to the nucleolus. Functionally, DNA-dependent RNA polymerase catalyzes the transcription of DNA into RNA using the four ribonucleoside triphosphates as substrates. Component of RNA polymerase II which synthesizes mRNA precursors and many functional non-coding RNAs. Pol II is the central component of the basal RNA polymerase II transcription machinery. It is composed of mobile elements that move relative to each other. Component of RNA polymerases IV and V which mediate short-interfering RNAs (siRNA) accumulation and subsequent RNA-directed DNA methylation-dependent (RdDM) transcriptional gene silencing (TGS) of endogenous repeated sequences, including transposable elements. Required for RNA silencing. The chain is DNA-directed RNA polymerases II, IV and V subunit 9A (NRPB9A) from Arabidopsis thaliana (Mouse-ear cress).